A 598-amino-acid polypeptide reads, in one-letter code: Elongation factor 4 (598 aa).

Positions 2 to 184 (DHIRNFSIIA…AIVKRVPPPR (183 aa)) constitute a tr-type G domain. Residues 14-19 (DHGKST) and 131-134 (NKID) each bind GTP.

Belongs to the TRAFAC class translation factor GTPase superfamily. Classic translation factor GTPase family. LepA subfamily.

It localises to the cell inner membrane. The enzyme catalyses GTP + H2O = GDP + phosphate + H(+). Its function is as follows. Required for accurate and efficient protein synthesis under certain stress conditions. May act as a fidelity factor of the translation reaction, by catalyzing a one-codon backward translocation of tRNAs on improperly translocated ribosomes. Back-translocation proceeds from a post-translocation (POST) complex to a pre-translocation (PRE) complex, thus giving elongation factor G a second chance to translocate the tRNAs correctly. Binds to ribosomes in a GTP-dependent manner. The polypeptide is Elongation factor 4 (Syntrophus aciditrophicus (strain SB)).